Reading from the N-terminus, the 408-residue chain is Protein ZNF365 (408 aa).

Phosphoserine is present on serine 16. The C2H2-type; degenerate zinc finger occupies 26–51 (FRCPRCGDHTRFRSLSSLRAHLEFSH). 2 positions are modified to phosphoserine: serine 139 and serine 146. Residues 170–298 (VEAVDRTIEK…QLEYYQSQQA (129 aa)) adopt a coiled-coil conformation. Threonine 176 is modified (phosphothreonine). Residue serine 370 is modified to Phosphoserine.

As to quaternary structure, homodimers. Interacts with NDE1 and NDEL1. Interacts with DISC1. Interacts with PARP1. Interacts with MCRS1. Expressed in cerebral cortex, hippocampus, olfactory tubercle and striatum.

It is found in the cytoplasm. It localises to the cytoskeleton. The protein localises to the microtubule organizing center. The protein resides in the centrosome. Its function is as follows. Involved in the positive regulation of oligodendrocyte differentiation during postnatal growth. Involved in the morphogenesis of basket cells in the somatosensory cortex during embryogenesis. Involved in dendritic arborization, morphogenesis of spine density dendrite, and establishment of postsynaptic dendrite density in cortical pyramidal neurons. Involved in the regulation of neurogenesis. Negatively regulates neurite outgrowth. Involved in homologous recombination (HR) repair pathway. Required for proper resolution of DNA double-strand breaks (DSBs) by HR. Is required for recovery of stalled replication forks, and directly contributes to genomic stability. Interacts with PARP1 and mediates MRE11-dependent DNA end resection during replication fork recovery. Contributes to genomic stability by preventing telomere dysfunction. The protein is Protein ZNF365 (Znf365) of Rattus norvegicus (Rat).